Reading from the N-terminus, the 290-residue chain is Protein-glutamine deamidase Cif (290 aa).

A disordered region spans residues 1–26 (MKISPNTISPSQSDPRMSTNVSQRSR). Residues cysteine 117, histidine 173, and glutamine 193 contribute to the active site.

Belongs to the Cif family.

The protein localises to the secreted. The protein resides in the host nucleus. It carries out the reaction L-glutaminyl-[protein] + H2O = L-glutamyl-[protein] + NH4(+). Functionally, protein-glutamine deamidase effector that inhibits the host cell cycle and other key cellular processes such as the actin network and programmed-cell death. Acts by mediating the side chain deamidation of 'Gln-40' of host NEDD8, converting it to glutamate, thereby abolishing the activity of cullin-RING-based E3 ubiquitin-protein ligase complexes (CRL complexes). Inactivation of CRL complexes prevents ubiquitination and subsequent degradation of the cyclin-dependent kinase inhibitors CDKN1A/p21 and CDKN1B/p27, leading to G1 and G2 cell cycle arrests in host cells. Also able to catalyze deamidation of 'Gln-40' of host ubiquitin in vitro; however, NEDD8 constitutes the preferred substrate in vivo. The polypeptide is Protein-glutamine deamidase Cif (Yersinia pseudotuberculosis serotype O:3 (strain YPIII)).